The primary structure comprises 144 residues: 6,7-dimethyl-8-ribityllumazine synthase (144 aa).

5-amino-6-(D-ribitylamino)uracil contacts are provided by residues Phe-21, 56 to 58 (AYE), and 80 to 82 (AVI). 85–86 (GT) provides a ligand contact to (2S)-2-hydroxy-3-oxobutyl phosphate. Residue His-88 is the Proton donor of the active site. Phe-113 contributes to the 5-amino-6-(D-ribitylamino)uracil binding site. A (2S)-2-hydroxy-3-oxobutyl phosphate-binding site is contributed by Arg-127.

The protein belongs to the DMRL synthase family. As to quaternary structure, forms an icosahedral capsid composed of 60 subunits, arranged as a dodecamer of pentamers.

The catalysed reaction is (2S)-2-hydroxy-3-oxobutyl phosphate + 5-amino-6-(D-ribitylamino)uracil = 6,7-dimethyl-8-(1-D-ribityl)lumazine + phosphate + 2 H2O + H(+). It functions in the pathway cofactor biosynthesis; riboflavin biosynthesis; riboflavin from 2-hydroxy-3-oxobutyl phosphate and 5-amino-6-(D-ribitylamino)uracil: step 1/2. In terms of biological role, catalyzes the formation of 6,7-dimethyl-8-ribityllumazine by condensation of 5-amino-6-(D-ribitylamino)uracil with 3,4-dihydroxy-2-butanone 4-phosphate. This is the penultimate step in the biosynthesis of riboflavin. This chain is 6,7-dimethyl-8-ribityllumazine synthase (ribH), found in Photobacterium leiognathi.